Here is a 272-residue protein sequence, read N- to C-terminus: Ethanolamine ammonia-lyase small subunit (272 aa).

Positions 161, 182, and 211 each coordinate adenosylcob(III)alamin.

The protein belongs to the EutC family. The basic unit is a heterodimer which dimerizes to form tetramers. The heterotetramers trimerize; 6 large subunits form a core ring with 6 small subunits projecting outwards. It depends on adenosylcob(III)alamin as a cofactor.

The protein localises to the bacterial microcompartment. It catalyses the reaction ethanolamine = acetaldehyde + NH4(+). It participates in amine and polyamine degradation; ethanolamine degradation. Functionally, catalyzes the deamination of various vicinal amino-alcohols to oxo compounds. Allows this organism to utilize ethanolamine as the sole source of nitrogen and carbon in the presence of external vitamin B12. In Xanthomonas campestris pv. campestris (strain B100), this protein is Ethanolamine ammonia-lyase small subunit.